A 122-amino-acid polypeptide reads, in one-letter code: Large ribosomal subunit protein uL14 (122 aa).

This sequence belongs to the universal ribosomal protein uL14 family. In terms of assembly, part of the 50S ribosomal subunit. Forms a cluster with proteins L3 and L19. In the 70S ribosome, L14 and L19 interact and together make contacts with the 16S rRNA in bridges B5 and B8.

Functionally, binds to 23S rRNA. Forms part of two intersubunit bridges in the 70S ribosome. The chain is Large ribosomal subunit protein uL14 from Borreliella burgdorferi (strain ATCC 35210 / DSM 4680 / CIP 102532 / B31) (Borrelia burgdorferi).